Consider the following 561-residue polypeptide: uncharacterized protein (561 aa).

Transmembrane regions (helical) follow at residues 27-49 (ILEF…GLLI), 54-71 (FFGI…ALAL), 83-105 (LVYQ…SEFF), 115-137 (LTLF…IKLF), 142-162 (IIGA…AAMV), and 177-199 (VVGY…AIGA). In terms of domain architecture, RCK C-terminal spans 292–373 (QQDVPIEDTD…MSEVRRFLGD (82 aa)). 4 helical membrane passes run 383-405 (LMPF…PLPG), 409-428 (LSLG…GALN), 441-463 (ASRT…SAGV), and 478-500 (IAGG…MPLF).

The protein belongs to the AAE transporter (TC 2.A.81) family.

Its subcellular location is the cell membrane. This is an uncharacterized protein from Corynebacterium diphtheriae (strain ATCC 700971 / NCTC 13129 / Biotype gravis).